Consider the following 286-residue polypeptide: MHDSRETFVNHAFVTGYPVKHSRSPLIHGHWLKQFGIRGSYRAHEVTPEAFPDFMRQIKEGRTDFCGGNVTIPHKEAAFRLADRPDELSAELGAANTLWLENGKIRATNTDGRGFVANLDERAKGWDRISAAVILGAGGASRAVIQAIRDRGVKTIHVVNRTPERARELADRFGTAVHAHSMAALPEVVSGAGLFVNTTSLGMDGEPAPAIDFSGLAPDAVVTDIVYVPLKTPLLRQAEEQGFRIVDGLGMLLHQAVPGFEKWFGLRPVVDETLRQIIISDMDRHA.

Residues serine 22–serine 24 and threonine 71 contribute to the shikimate site. Residue lysine 75 is the Proton acceptor of the active site. Glutamate 87 is an NADP(+) binding site. Shikimate is bound by residues asparagine 96 and aspartate 111. NADP(+) is bound by residues glycine 136–alanine 140, asparagine 160–arginine 165, and isoleucine 225. Tyrosine 227 lines the shikimate pocket. Glycine 248 provides a ligand contact to NADP(+).

The protein belongs to the shikimate dehydrogenase family. In terms of assembly, homodimer.

The catalysed reaction is shikimate + NADP(+) = 3-dehydroshikimate + NADPH + H(+). It functions in the pathway metabolic intermediate biosynthesis; chorismate biosynthesis; chorismate from D-erythrose 4-phosphate and phosphoenolpyruvate: step 4/7. Functionally, involved in the biosynthesis of the chorismate, which leads to the biosynthesis of aromatic amino acids. Catalyzes the reversible NADPH linked reduction of 3-dehydroshikimate (DHSA) to yield shikimate (SA). The polypeptide is Shikimate dehydrogenase (NADP(+)) (Rhizobium meliloti (strain 1021) (Ensifer meliloti)).